We begin with the raw amino-acid sequence, 97 residues long: Small ribosomal subunit protein bS20 (97 aa).

This sequence belongs to the bacterial ribosomal protein bS20 family.

Its function is as follows. Binds directly to 16S ribosomal RNA. The sequence is that of Small ribosomal subunit protein bS20 from Prochlorococcus marinus (strain MIT 9515).